The primary structure comprises 197 residues: Guanylate kinase (197 aa).

The region spanning glycine 7–valine 185 is the Guanylate kinase-like domain. Residue serine 14–serine 21 coordinates ATP.

Belongs to the guanylate kinase family.

The protein localises to the cytoplasm. It carries out the reaction GMP + ATP = GDP + ADP. Its function is as follows. Essential for recycling GMP and indirectly, cGMP. The polypeptide is Guanylate kinase (gmk) (Rickettsia prowazekii (strain Madrid E)).